A 157-amino-acid polypeptide reads, in one-letter code: Ribosome maturation factor RimP (157 aa).

This sequence belongs to the RimP family.

The protein localises to the cytoplasm. Required for maturation of 30S ribosomal subunits. The sequence is that of Ribosome maturation factor RimP from Bacillus licheniformis (strain ATCC 14580 / DSM 13 / JCM 2505 / CCUG 7422 / NBRC 12200 / NCIMB 9375 / NCTC 10341 / NRRL NRS-1264 / Gibson 46).